Consider the following 302-residue polypeptide: Methionyl-tRNA formyltransferase (302 aa).

108–111 (SLLP) provides a ligand contact to (6S)-5,6,7,8-tetrahydrofolate. The segment covering 276–288 (REGKRPMEPEEFL) has biased composition (basic and acidic residues). The interval 276–302 (REGKRPMEPEEFLRGFPLPEGSRAHTA) is disordered.

It belongs to the Fmt family.

The enzyme catalyses L-methionyl-tRNA(fMet) + (6R)-10-formyltetrahydrofolate = N-formyl-L-methionyl-tRNA(fMet) + (6S)-5,6,7,8-tetrahydrofolate + H(+). Functionally, attaches a formyl group to the free amino group of methionyl-tRNA(fMet). The formyl group appears to play a dual role in the initiator identity of N-formylmethionyl-tRNA by promoting its recognition by IF2 and preventing the misappropriation of this tRNA by the elongation apparatus. In Cereibacter sphaeroides (strain ATCC 17029 / ATH 2.4.9) (Rhodobacter sphaeroides), this protein is Methionyl-tRNA formyltransferase.